Here is a 2137-residue protein sequence, read N- to C-terminus: Pecanex-like protein 2 (2137 aa).

2 consecutive transmembrane segments (helical) span residues C34–P54 and A57–V77. 4 disordered regions span residues Q92–S163, N225–G251, E402–V530, and S545–N572. Residues S96–T114 show a composition bias toward basic and acidic residues. A compositionally biased stretch (polar residues) spans H116–I125. Residue N136 is glycosylated (N-linked (GlcNAc...) asparagine). Residues S146 to S156 show a composition bias toward polar residues. N449 is a glycosylation site (N-linked (GlcNAc...) asparagine). Basic and acidic residues predominate over residues I479–W490. Polar residues predominate over residues G510–K520. 5 N-linked (GlcNAc...) asparagine glycosylation sites follow: N550, N572, N587, N598, and N613. The segment covering A593–E602 has biased composition (polar residues). A disordered region spans residues A593–D612. Disordered stretches follow at residues E621 to P655 and A740 to P763. Residues G630–P655 show a composition bias toward polar residues. Low complexity predominate over residues S746–S760. A run of 13 helical transmembrane segments spans residues L844 to F864, M868 to V888, Q901 to L921, Y952 to I972, I983 to V1003, H1029 to S1049, L1099 to L1119, F1124 to L1144, Y1193 to N1213, S1237 to F1257, S1265 to H1285, G1302 to F1322, and T1324 to I1344. Residues N1412, N1553, and N1818 are each glycosylated (N-linked (GlcNAc...) asparagine). Residues R1876–P1958 are disordered. Composition is skewed to polar residues over residues S1901–E1910, G1920–R1929, and S1937–P1958. Residue N2054 is glycosylated (N-linked (GlcNAc...) asparagine).

This sequence belongs to the pecanex family.

Its subcellular location is the membrane. Its function is as follows. May play a role in tumorigenesis of colorectal carcinomas with high microsatellite instability (MSI-H). The polypeptide is Pecanex-like protein 2 (Homo sapiens (Human)).